Here is a 238-residue protein sequence, read N- to C-terminus: MELLDKVLEYYKVKNPLVVKHLLIKYMNLVLEKNKLFNLTAIENEEEFVIKHIADSLSLLKFIEQENSNQNPVAIDIGSGFGAPGLFVKIAMPSVNVFLNDSNKKKCKFMNEAKESLGISGVNVVCERAEVLGRKEEFREKFDFVFARAVDRLNVLCEYAIPLLKVGGAFLAQKGFECEDEIDLAKNAIEILGGEIYSIEKFVLPYSDEKRSIIIIKKLRQTPSNFPRNTKQIVKKPL.

S-adenosyl-L-methionine is bound by residues G78, 129-130 (AE), and R148.

Belongs to the methyltransferase superfamily. RNA methyltransferase RsmG family.

Its subcellular location is the cytoplasm. Functionally, specifically methylates the N7 position of a guanine in 16S rRNA. In Caldicellulosiruptor bescii (strain ATCC BAA-1888 / DSM 6725 / KCTC 15123 / Z-1320) (Anaerocellum thermophilum), this protein is Ribosomal RNA small subunit methyltransferase G.